The primary structure comprises 283 residues: Putative S-adenosyl-L-methionine-dependent methyltransferase SCO7813 (283 aa).

S-adenosyl-L-methionine contacts are provided by residues Asp121 and Asp150 to Leu151. The segment at Met264 to Arg283 is disordered.

It belongs to the UPF0677 family.

Exhibits S-adenosyl-L-methionine-dependent methyltransferase activity. The polypeptide is Putative S-adenosyl-L-methionine-dependent methyltransferase SCO7813 (Streptomyces coelicolor (strain ATCC BAA-471 / A3(2) / M145)).